A 912-amino-acid polypeptide reads, in one-letter code: MRTLISHRQCVTSPFLISAASPPFPGRCFKLSSFTPPRHRRFSSLSIRNISHESADQTSSSRPRTLYPGGYKRPELAVPGLLLRLDADEVMSGNREETLDLVDRALAKSVQIVVIDGGATAGKLYEAACLLKSLVKGRAYLLIAERVDIASAVGASGVALSDEGLPAIVARNTLMGSNPDSVLLPLVARIVKDVDSALIASSSEGADFLILGSGEEDTQVADSLLKSVKIPIYVTCRGNEEAKEELQLLKSGVSGFVISLKDLRSSRDVALRQSLDGAYVVNNHETQNMNELPEKKNSAGFIKLEDKQKLIVEMEKSVLRETIEIIHKAAPLMEEVSLLIDAVSRIDEPFLMVIVGEFNSGKSTVINALLGKRYLKEGVVPTTNEITFLCYSDLESEEQQRCQTHPDGQYVCYLPAPILKDINIVDTPGTNVILQRQQRLTEEFVPRADLLVFVLSADRPLTESEVAFLRYTQQWKKKFVFILNKSDIYRDARELEEAISFVKENTRKLLNTENVILYPVSARSALEAKLSTASLVGRDDLEIADPGSNWRVQSFNELEKFLYSFLDSSTATGMERIRLKLETPMAIAERLLSSVEALVRQDCLAAREDLASADKIISRTKEYALKMEYESISWRRQALSLIDNARLQVVDLIGTTLRLSSLDLAISYVFKGEKSASVAATSKVQGEILAPALTNAKELLGKYAEWLQSNTAREGSLSLKSFENKWPTYVNSKTQLGIDTYDLLQKTDKVSLKTIQNLSAGTTSKRLEQDIREVFFVTVGGLGAAGLSASLLTSVLPTTLEDLLALGLCSAGGYVAIANFPYRRQAIIGKVNKVADALAQQLEDAMQKDLSDATSNLVNFVNIVAKPYREEAQLRLDRLLGIQKELSDIRSKLQLLQVDIDNLHVSRDEMRL.

Residues 1–54 constitute a chloroplast transit peptide; sequence MRTLISHRQCVTSPFLISAASPPFPGRCFKLSSFTPPRHRRFSSLSIRNISHES. The disordered stretch occupies residues 51 to 71; it reads SHESADQTSSSRPRTLYPGGY. Residues 55 to 773 lie on the Stromal side of the membrane; sequence ADQTSSSRPR…SKRLEQDIRE (719 aa). GTP is bound by residues 359-364 and S521; that span reads NSGKST. The chain crosses the membrane as a helical span at residues 774-794; sequence VFFVTVGGLGAAGLSASLLTS. Over 795-801 the chain is Chloroplast intermembrane; it reads VLPTTLE. The helical transmembrane segment at 802–822 threads the bilayer; that stretch reads DLLALGLCSAGGYVAIANFPY. Topologically, residues 823 to 912 are stromal; the sequence is RRQAIIGKVN…LHVSRDEMRL (90 aa). Positions 877 to 904 form a coiled coil; the sequence is DRLLGIQKELSDIRSKLQLLQVDIDNLH.

This sequence belongs to the TRAFAC class dynamin-like GTPase superfamily. Dynamin/Fzo/YdjA family. Mitofusin subfamily.

Its subcellular location is the plastid. The protein resides in the chloroplast inner membrane. The protein localises to the chloroplast thylakoid membrane. Functionally, probable membrane-remodeling GTPase that plays a unique role in the in the determination of thylakoid and chloroplast morphology and regulates organization of the thylakoid network. Not involved in the determination of mitochondrial morphology or ultrastructure. The protein is Probable transmembrane GTPase FZO-like, chloroplastic of Arabidopsis thaliana (Mouse-ear cress).